The sequence spans 329 residues: 4-hydroxythreonine-4-phosphate dehydrogenase (329 aa).

Residues H136 and T137 each coordinate substrate. Residues H166, H211, and H266 each contribute to the a divalent metal cation site. Residues K274, N283, and R292 each coordinate substrate.

This sequence belongs to the PdxA family. In terms of assembly, homodimer. Zn(2+) serves as cofactor. It depends on Mg(2+) as a cofactor. The cofactor is Co(2+).

Its subcellular location is the cytoplasm. It carries out the reaction 4-(phosphooxy)-L-threonine + NAD(+) = 3-amino-2-oxopropyl phosphate + CO2 + NADH. It participates in cofactor biosynthesis; pyridoxine 5'-phosphate biosynthesis; pyridoxine 5'-phosphate from D-erythrose 4-phosphate: step 4/5. Functionally, catalyzes the NAD(P)-dependent oxidation of 4-(phosphooxy)-L-threonine (HTP) into 2-amino-3-oxo-4-(phosphooxy)butyric acid which spontaneously decarboxylates to form 3-amino-2-oxopropyl phosphate (AHAP). In Escherichia coli (strain SE11), this protein is 4-hydroxythreonine-4-phosphate dehydrogenase.